Reading from the N-terminus, the 435-residue chain is 3-phosphoshikimate 1-carboxyvinyltransferase (435 aa).

3-phosphoshikimate is bound by residues Lys-25, Ser-26, and Arg-30. Phosphoenolpyruvate is bound at residue Lys-25. Phosphoenolpyruvate is bound by residues Gly-99 and Arg-130. Ser-176, Ser-177, Gln-178, Ser-204, Asp-319, Asn-342, and Lys-346 together coordinate 3-phosphoshikimate. Gln-178 lines the phosphoenolpyruvate pocket. Catalysis depends on Asp-319, which acts as the Proton acceptor. Phosphoenolpyruvate-binding residues include Arg-350, Arg-394, and Lys-419.

The protein belongs to the EPSP synthase family. As to quaternary structure, monomer.

It localises to the cytoplasm. It catalyses the reaction 3-phosphoshikimate + phosphoenolpyruvate = 5-O-(1-carboxyvinyl)-3-phosphoshikimate + phosphate. The protein operates within metabolic intermediate biosynthesis; chorismate biosynthesis; chorismate from D-erythrose 4-phosphate and phosphoenolpyruvate: step 6/7. In terms of biological role, catalyzes the transfer of the enolpyruvyl moiety of phosphoenolpyruvate (PEP) to the 5-hydroxyl of shikimate-3-phosphate (S3P) to produce enolpyruvyl shikimate-3-phosphate and inorganic phosphate. This chain is 3-phosphoshikimate 1-carboxyvinyltransferase, found in Haemophilus ducreyi (strain 35000HP / ATCC 700724).